Reading from the N-terminus, the 677-residue chain is Protein windpipe (677 aa).

The N-terminal stretch at 1 to 20 is a signal peptide; sequence MERVHLTAWLALFLIVVANA. The Extracellular segment spans residues 21–451; that stretch reads TPTPARTPTG…IGKPKDDSSA (431 aa). 2 N-linked (GlcNAc...) asparagine glycosylation sites follow: Asn-53 and Asn-80. LRR repeat units follow at residues 91-116, 118-133, 134-156, and 158-183; these read LPEL…GLKR, NLKH…RKLP, QHLQ…LTHM, and QLHQ…NWLV. Residues Asn-145 and Asn-170 are each glycosylated (N-linked (GlcNAc...) asparagine). The 33-residue stretch at 184 to 216 folds into the LRRCT domain; the sequence is ERIVYMEHPVVCSYPLEFRGRSWLQLKQDEICK. Disordered regions lie at residues 264–285, 298–317, and 325–385; these read AKKV…SGDL, TVAE…ASPS, and KDED…TVFS. Residues 347 to 372 are compositionally biased toward basic and acidic residues; it reads SKVKITSEDDIDSDGKPEESDVRPLE. A compositionally biased stretch (polar residues) spans 374–385; the sequence is PENSENPDTVFS. The chain crosses the membrane as a helical span at residues 452–472; sequence IYYLLAVIGLIVVGLVLFVAI. The Cytoplasmic segment spans residues 473–677; the sequence is KRCKYDSNAA…EPTHQVINGH (205 aa). Disordered stretches follow at residues 502–523 and 539–677; these read LGKP…LIGE and NGEA…INGH. Over residues 595–607 the composition is skewed to low complexity; that stretch reads AQQQQLAEQNNNE.

In terms of assembly, interacts with dome; the interaction promotes internalization of dome and its subsequent lysosomal degradation. In adult intestine, expressed in both small progenitor cells and large nuclei enterocytes (at protein level). During embryogenesis, restricted to the developing trachea.

The protein localises to the cell membrane. Plays a role in negative regulation of the JAK/STAT pathway by binding to the receptor dome and promoting its internalization for subsequent lysosomal degradation, thereby reducing JAK/STAT signaling. This Drosophila melanogaster (Fruit fly) protein is Protein windpipe.